The chain runs to 187 residues: MDLENLAEETRIVLADLIKRSDIKKGQIFVLGLSSSEVAGGVIGKNSNLDIGEVIVKTILTYLNDRGIYLAVQGCEHLNRALVVERELADKRNLEIVNVLPNLHAGGSGQLAAFKYMKDPVEVEEIVADAGLDIGDTAIGMHVKRVQVPLRPLLRELEGAHLTALASRPKLIGGSRASYQPDPIRKF.

It belongs to the UPF0340 family.

In Streptococcus mutans serotype c (strain ATCC 700610 / UA159), this protein is UPF0340 protein SMU_87.